Here is a 76-residue protein sequence, read N- to C-terminus: Adropin (76 aa).

The first 33 residues, methionine 1–alanine 33, serve as a signal peptide directing secretion. The segment at valine 41–proline 76 is disordered. The span at serine 52–lysine 65 shows a compositional bias: pro residues.

In terms of tissue distribution, expressed in liver and brain.

Its subcellular location is the secreted. In terms of biological role, involved in the regulation of glucose homeostasis and lipid metabolism. The protein is Adropin (ENHO) of Homo sapiens (Human).